We begin with the raw amino-acid sequence, 33 residues long: Brevinin-2CDYb (33 aa).

An intrachain disulfide couples C27 to C33.

The protein belongs to the frog skin active peptide (FSAP) family. Brevinin subfamily. As to expression, expressed by the skin glands.

The protein resides in the secreted. Functionally, antimicrobial peptide. The sequence is that of Brevinin-2CDYb from Rana dybowskii (Dybovsky's frog).